Reading from the N-terminus, the 482-residue chain is Glutamyl-tRNA(Gln) amidotransferase subunit A (482 aa).

Residues Lys-81 and Ser-156 each act as charge relay system in the active site. The active-site Acyl-ester intermediate is the Ser-180.

This sequence belongs to the amidase family. GatA subfamily. Heterotrimer of A, B and C subunits.

It carries out the reaction L-glutamyl-tRNA(Gln) + L-glutamine + ATP + H2O = L-glutaminyl-tRNA(Gln) + L-glutamate + ADP + phosphate + H(+). Its function is as follows. Allows the formation of correctly charged Gln-tRNA(Gln) through the transamidation of misacylated Glu-tRNA(Gln) in organisms which lack glutaminyl-tRNA synthetase. The reaction takes place in the presence of glutamine and ATP through an activated gamma-phospho-Glu-tRNA(Gln). This chain is Glutamyl-tRNA(Gln) amidotransferase subunit A, found in Brachyspira hyodysenteriae (strain ATCC 49526 / WA1).